Consider the following 136-residue polypeptide: Evasin P991 (136 aa).

Positions 1 to 28 (MHSTIVYACLLALAVFVALHGTPLAALA) are cleaved as a signal peptide. N-linked (GlcNAc...) asparagine glycans are attached at residues Asn41, Asn61, Asn64, Asn78, Asn92, Asn100, and Asn122. 4 disulfide bridges follow: Cys55–Cys77, Cys73–Cys114, Cys90–Cys119, and Cys109–Cys128.

Its subcellular location is the secreted. Its function is as follows. Salivary chemokine-binding protein which has chemokine-neutralizing activity and binds to host chemokines CCL2, CCL3, CCL3L1, CCL4, CCL4L1, CCL5, CCL6, CCL7, CCL8, CCL9, CCL11, CCL12, CCL13, CCL14, CCL16, CCL17, CCL18, CCL19, CCL22, CCL23, CCL24 and CCL27. In Amblyomma cajennense (Cayenne tick), this protein is Evasin P991.